The chain runs to 227 residues: Type II restriction enzyme HhaII (227 aa).

As to quaternary structure, homodimer.

It carries out the reaction Endonucleolytic cleavage of DNA to give specific double-stranded fragments with terminal 5'-phosphates.. In terms of biological role, a P subtype restriction enzyme that recognizes the double-stranded sequence 5'-GANTC-3' and cleaves after G-1. The chain is Type II restriction enzyme HhaII (hhaIIR) from Haemophilus parahaemolyticus.